The chain runs to 290 residues: ATP synthase subunit a (290 aa).

6 consecutive transmembrane segments (helical) span residues 44–64, 104–124, 161–181, 194–214, 233–253, and 260–280; these read AFHVDTLGWSVALGVIFILLF, VIAPLALTIFVWVFLMNAIDL, LSVFALIIFYSIKVKGIGGFI, ILVQALLIPVNFLLEFVTLVA, VFILIAVMFGSGLLWLSGMGV, and AVFHILIITLQAFIFMMLTIV.

This sequence belongs to the ATPase A chain family. As to quaternary structure, F-type ATPases have 2 components, CF(1) - the catalytic core - and CF(0) - the membrane proton channel. CF(1) has five subunits: alpha(3), beta(3), gamma(1), delta(1), epsilon(1). CF(0) has three main subunits: a(1), b(2) and c(9-12). The alpha and beta chains form an alternating ring which encloses part of the gamma chain. CF(1) is attached to CF(0) by a central stalk formed by the gamma and epsilon chains, while a peripheral stalk is formed by the delta and b chains.

It is found in the cell inner membrane. Its function is as follows. Key component of the proton channel; it plays a direct role in the translocation of protons across the membrane. The chain is ATP synthase subunit a from Pseudomonas fluorescens (strain ATCC BAA-477 / NRRL B-23932 / Pf-5).